Consider the following 332-residue polypeptide: DNA-directed RNA polymerase subunit alpha (332 aa).

An alpha N-terminal domain (alpha-NTD) region spans residues 1–230 (MKKITTSAYM…KQMSIFNNVL (230 aa)). Positions 246–332 (EHSKLLESVE…LRKKISELKS (87 aa)) are alpha C-terminal domain (alpha-CTD).

This sequence belongs to the RNA polymerase alpha chain family. In terms of assembly, homodimer. The RNAP catalytic core consists of 2 alpha, 1 beta, 1 beta' and 1 omega subunit. When a sigma factor is associated with the core the holoenzyme is formed, which can initiate transcription.

It carries out the reaction RNA(n) + a ribonucleoside 5'-triphosphate = RNA(n+1) + diphosphate. Its function is as follows. DNA-dependent RNA polymerase catalyzes the transcription of DNA into RNA using the four ribonucleoside triphosphates as substrates. This Campylobacter fetus subsp. fetus (strain 82-40) protein is DNA-directed RNA polymerase subunit alpha.